Here is a 438-residue protein sequence, read N- to C-terminus: Probable glycine dehydrogenase (decarboxylating) subunit 1 (438 aa).

It belongs to the GcvP family. N-terminal subunit subfamily. As to quaternary structure, the glycine cleavage system is composed of four proteins: P, T, L and H. In this organism, the P 'protein' is a heterodimer of two subunits.

The catalysed reaction is N(6)-[(R)-lipoyl]-L-lysyl-[glycine-cleavage complex H protein] + glycine + H(+) = N(6)-[(R)-S(8)-aminomethyldihydrolipoyl]-L-lysyl-[glycine-cleavage complex H protein] + CO2. In terms of biological role, the glycine cleavage system catalyzes the degradation of glycine. The P protein binds the alpha-amino group of glycine through its pyridoxal phosphate cofactor; CO(2) is released and the remaining methylamine moiety is then transferred to the lipoamide cofactor of the H protein. This chain is Probable glycine dehydrogenase (decarboxylating) subunit 1, found in Syntrophomonas wolfei subsp. wolfei (strain DSM 2245B / Goettingen).